A 417-amino-acid chain; its full sequence is Exodeoxyribonuclease 7 large subunit (417 aa).

Belongs to the XseA family. As to quaternary structure, heterooligomer composed of large and small subunits.

It is found in the cytoplasm. The enzyme catalyses Exonucleolytic cleavage in either 5'- to 3'- or 3'- to 5'-direction to yield nucleoside 5'-phosphates.. Functionally, bidirectionally degrades single-stranded DNA into large acid-insoluble oligonucleotides, which are then degraded further into small acid-soluble oligonucleotides. The sequence is that of Exodeoxyribonuclease 7 large subunit from Lactococcus lactis subsp. lactis (strain IL1403) (Streptococcus lactis).